A 283-amino-acid polypeptide reads, in one-letter code: Orotidine 5'-phosphate decarboxylase (283 aa).

The Proton donor role is filled by K97.

This sequence belongs to the OMP decarboxylase family. Type 2 subfamily.

The catalysed reaction is orotidine 5'-phosphate + H(+) = UMP + CO2. It participates in pyrimidine metabolism; UMP biosynthesis via de novo pathway; UMP from orotate: step 2/2. This Clostridium botulinum (strain Okra / Type B1) protein is Orotidine 5'-phosphate decarboxylase.